The chain runs to 386 residues: L-olivosyl-oleandolide 3-O-methyltransferase (386 aa).

S-adenosyl-L-methionine-binding positions include S166, 195–201 (EIGIGGY), S210, D227, 245–246 (RQ), and D268. Residue D268 coordinates Mg(2+). H271 serves as the catalytic Proton acceptor. E296 and D297 together coordinate Mg(2+). Residues 364-386 (RRAINKEGGIPHTVPREPFWNDN) are disordered.

This sequence belongs to the methyltransferase OleY/MycE family. As to quaternary structure, homodimer. Mg(2+) is required as a cofactor.

The catalysed reaction is L-olivosyl-oleandolide + S-adenosyl-L-methionine = L-oleandrosyl-oleandolide + S-adenosyl-L-homocysteine + H(+). It participates in antibiotic biosynthesis. 3-O-methyltransferase involved in the synthesis of L-oleandrose, a sugar attached to oleandomycin, a macrolide antibiotic. Acts on monoglycosylated macrolactones and mediates the conversion of L-olivosyl-erythronolide B into its 3-O-methylated derivative, L-oleandrosyl-erythronolide B. Also able to methylate other monoglycosylated derivatives, such as L-rhamnosyl- and L-mycarosyl-erythronolide B. The polypeptide is L-olivosyl-oleandolide 3-O-methyltransferase (oleY) (Streptomyces antibioticus).